The following is a 175-amino-acid chain: Large ribosomal subunit protein uL16 (175 aa).

This sequence belongs to the universal ribosomal protein uL16 family.

This is Large ribosomal subunit protein uL16 from Caldivirga maquilingensis (strain ATCC 700844 / DSM 13496 / JCM 10307 / IC-167).